The sequence spans 233 residues: 2-C-methyl-D-erythritol 4-phosphate cytidylyltransferase (233 aa).

This sequence belongs to the IspD/TarI cytidylyltransferase family. IspD subfamily.

The catalysed reaction is 2-C-methyl-D-erythritol 4-phosphate + CTP + H(+) = 4-CDP-2-C-methyl-D-erythritol + diphosphate. It functions in the pathway isoprenoid biosynthesis; isopentenyl diphosphate biosynthesis via DXP pathway; isopentenyl diphosphate from 1-deoxy-D-xylulose 5-phosphate: step 2/6. Catalyzes the formation of 4-diphosphocytidyl-2-C-methyl-D-erythritol from CTP and 2-C-methyl-D-erythritol 4-phosphate (MEP). This chain is 2-C-methyl-D-erythritol 4-phosphate cytidylyltransferase, found in Nitrosomonas eutropha (strain DSM 101675 / C91 / Nm57).